A 389-amino-acid chain; its full sequence is Sulfate adenylyltransferase (389 aa).

Belongs to the sulfate adenylyltransferase family.

The catalysed reaction is sulfate + ATP + H(+) = adenosine 5'-phosphosulfate + diphosphate. It participates in sulfur metabolism; hydrogen sulfide biosynthesis; sulfite from sulfate: step 1/3. The protein is Sulfate adenylyltransferase of Deinococcus deserti (strain DSM 17065 / CIP 109153 / LMG 22923 / VCD115).